The following is a 356-amino-acid chain: Galectin-9C (356 aa).

The region spanning 17–148 (FSGTIQGGLQ…SVQLSYISFQ (132 aa)) is the Galectin 1 domain. 82–88 (WGPEERK) is an a beta-D-galactoside binding site. The segment at 170–190 (FPPRPRGRRQKPPSVRPANPA) is disordered. The Galectin 2 domain occupies 228–356 (FITTIPGGLY…GDIQLTHVQT (129 aa)). Position 288–294 (288–294 (WGSEERS)) interacts with a beta-D-galactoside.

Functionally, binds galactosides. The chain is Galectin-9C (LGALS9C) from Homo sapiens (Human).